A 210-amino-acid chain; its full sequence is Large ribosomal subunit protein bL25 (210 aa).

The segment at 186–210 (ISSASTEKEAESNQESTSTTPSSES) is disordered. Residues 198 to 210 (NQESTSTTPSSES) are compositionally biased toward low complexity.

This sequence belongs to the bacterial ribosomal protein bL25 family. CTC subfamily. In terms of assembly, part of the 50S ribosomal subunit; part of the 5S rRNA/L5/L18/L25 subcomplex. Contacts the 5S rRNA. Binds to the 5S rRNA independently of L5 and L18.

Its function is as follows. This is one of the proteins that binds to the 5S RNA in the ribosome where it forms part of the central protuberance. The protein is Large ribosomal subunit protein bL25 of Ehrlichia chaffeensis (strain ATCC CRL-10679 / Arkansas).